A 383-amino-acid polypeptide reads, in one-letter code: Dual-specificity RNA methyltransferase RlmN (383 aa).

The active-site Proton acceptor is Glu-93. Residues 99–339 (EETRGTLCVS…TTIRKTRGDD (241 aa)) form the Radical SAM core domain. An intrachain disulfide couples Cys-106 to Cys-344. [4Fe-4S] cluster is bound by residues Cys-113, Cys-117, and Cys-120. S-adenosyl-L-methionine-binding positions include 170-171 (GE), Ser-202, 224-226 (SLH), and Asn-301. Cys-344 acts as the S-methylcysteine intermediate in catalysis.

This sequence belongs to the radical SAM superfamily. RlmN family. [4Fe-4S] cluster is required as a cofactor.

It is found in the cytoplasm. It catalyses the reaction adenosine(2503) in 23S rRNA + 2 reduced [2Fe-2S]-[ferredoxin] + 2 S-adenosyl-L-methionine = 2-methyladenosine(2503) in 23S rRNA + 5'-deoxyadenosine + L-methionine + 2 oxidized [2Fe-2S]-[ferredoxin] + S-adenosyl-L-homocysteine. The catalysed reaction is adenosine(37) in tRNA + 2 reduced [2Fe-2S]-[ferredoxin] + 2 S-adenosyl-L-methionine = 2-methyladenosine(37) in tRNA + 5'-deoxyadenosine + L-methionine + 2 oxidized [2Fe-2S]-[ferredoxin] + S-adenosyl-L-homocysteine. Specifically methylates position 2 of adenine 2503 in 23S rRNA and position 2 of adenine 37 in tRNAs. m2A2503 modification seems to play a crucial role in the proofreading step occurring at the peptidyl transferase center and thus would serve to optimize ribosomal fidelity. This chain is Dual-specificity RNA methyltransferase RlmN, found in Ralstonia pickettii (strain 12J).